A 299-amino-acid chain; its full sequence is tRNA dimethylallyltransferase (299 aa).

13 to 20 lines the ATP pocket; the sequence is GPTASGKT. 15 to 20 contributes to the substrate binding site; sequence TASGKT. Residues 38–41 are interaction with substrate tRNA; that stretch reads DSRQ.

This sequence belongs to the IPP transferase family. As to quaternary structure, monomer. It depends on Mg(2+) as a cofactor.

The catalysed reaction is adenosine(37) in tRNA + dimethylallyl diphosphate = N(6)-dimethylallyladenosine(37) in tRNA + diphosphate. Its function is as follows. Catalyzes the transfer of a dimethylallyl group onto the adenine at position 37 in tRNAs that read codons beginning with uridine, leading to the formation of N6-(dimethylallyl)adenosine (i(6)A). This is tRNA dimethylallyltransferase from Prochlorococcus marinus (strain MIT 9313).